The chain runs to 323 residues: Mitochondrial glutamate carrier 1 (323 aa).

Solcar repeat units follow at residues 6-93, 101-214, and 223-312; these read ISLP…FRHQ, LTLP…LNQL, and SPFY…GIAE. A run of 6 helical transmembrane segments spans residues 12 to 32, 62 to 82, 107 to 127, 189 to 209, 223 to 243, and 292 to 312; these read LINGGIAGLIGVTCVFPIDLA, YFGMYRGAAVNLTLVTPEKAI, MLAGCGAGTCQVIVTTPMEML, GLGATLLRDVPFSIVYFPLFA, SPFYVSFLAGCVAGSAAAVAV, and ALVIAPLFGIAQVVYFLGIAE.

It belongs to the mitochondrial carrier (TC 2.A.29) family. As to expression, detected in insulin-secreting beta-cells and pancreatic islets (at the protein level).

It is found in the mitochondrion inner membrane. It carries out the reaction L-glutamate(in) + H(+)(in) = L-glutamate(out) + H(+)(out). Its function is as follows. Mitochondrial glutamate/H(+) symporter. Responsible for the transport of glutamate from the cytosol into the mitochondrial matrix with the concomitant import of a proton. Plays a role in the control of glucose-stimulated insulin secretion. The protein is Mitochondrial glutamate carrier 1 of Rattus norvegicus (Rat).